The following is a 325-amino-acid chain: Replication factor C small subunit (325 aa).

47–54 serves as a coordination point for ATP; the sequence is GPPGTGKT.

The protein belongs to the activator 1 small subunits family. RfcS subfamily. As to quaternary structure, heteromultimer composed of small subunits (RfcS) and large subunits (RfcL).

Its function is as follows. Part of the RFC clamp loader complex which loads the PCNA sliding clamp onto DNA. This chain is Replication factor C small subunit, found in Aeropyrum pernix (strain ATCC 700893 / DSM 11879 / JCM 9820 / NBRC 100138 / K1).